The following is a 559-amino-acid chain: MVLDAVLARGRTVCKHNGLLILSVLSVIVGCLLGFFLRTQRLSPQEISYFQFPGELLMRMLKMLILPLVVSSLMSGLASLDAKTSSRLGILTVAYYLWTTFLAVVVGIIMVSIIHPGGAAQKETTEQSGKPVMSSADALLDLVRNMFPANLVEATFKQYRTKTTPVIKSPRGAAEEAPRRIVIYGVQEDNGSRVQNFALDLTPPPEIVYKSEPGTSDGMNVLGIVIFSATMGIMLGRMGDSGTPLVSFCQCLNESVMKIVAVAGWYFPFGIVFLIAGKILEMDDPKAVGKKLGFYAVTVVCGLVVHGLLILPLLYFLITKKNPIVFIRGVLQALLIALATSSSSATLPITFKCLLENNHIDRRIARFVLPVGATINMDGTALYEAVAAIFIAQVNNYELDFGQIITISITATAASIGAAGIPQAGLVTMVIVLTSVGLPTDDINLIIAVDWALDRFRTMINVLGDALAAGIMAHICRKDFAQDMGTEKLLPCETKPVTLQEIVAAQQNGCVKSVAEASELTLGPTCPHHIPVQVEQDEDPAAASLDHCTIEISELETNV.

Residues 1–16 are Cytoplasmic-facing; that stretch reads MVLDAVLARGRTVCKH. Helical transmembrane passes span 17 to 37, 60 to 80, and 94 to 114; these read NGLL…GFFL, MLKM…LASL, and AYYL…VSII. Residues 115–215 lie on the Extracellular side of the membrane; sequence HPGGAAQKET…EIVYKSEPGT (101 aa). An N-linked (GlcNAc...) asparagine glycan is attached at asparagine 190. Residues 216 to 236 form a helical membrane-spanning segment; the sequence is SDGMNVLGIVIFSATMGIMLG. N-linked (GlcNAc...) asparagine glycosylation occurs at asparagine 253. 6 helical membrane-spanning segments follow: residues 259–279, 298–318, 329–349, 371–391, 413–433, and 456–476; these read IVAV…AGKI, TVVC…YFLI, GVLQ…TLPI, VGAT…AIFI, AASI…VIVL, and FRTM…AHIC.

Belongs to the dicarboxylate/amino acid:cation symporter (DAACS) (TC 2.A.23) family. SLC1A7 subfamily. In terms of assembly, interacts with the PDZ domains of DLG4. In terms of tissue distribution, expressed in retina, located in both cone and rod photoreceptor terminals and in axon terminals of rod bipolar cells.

It localises to the photoreceptor inner segment membrane. It is found in the synaptic cell membrane. The enzyme catalyses K(+)(in) + L-glutamate(out) + 3 Na(+)(out) + H(+)(out) = K(+)(out) + L-glutamate(in) + 3 Na(+)(in) + H(+)(in). It catalyses the reaction K(+)(in) + L-aspartate(out) + 3 Na(+)(out) + H(+)(out) = K(+)(out) + L-aspartate(in) + 3 Na(+)(in) + H(+)(in). It carries out the reaction D-aspartate(out) + K(+)(in) + 3 Na(+)(out) + H(+)(out) = D-aspartate(in) + K(+)(out) + 3 Na(+)(in) + H(+)(in). Sodium-dependent, high-affinity amino acid transporter that mediates the uptake of L-glutamate and also L-aspartate and D-aspartate. Functions as a symporter that transports one amino acid molecule together with two or three Na(+) ions and one proton, in parallel with the counter-transport of one K(+) ion. Acts primarily as an inhibitory glutamate-gated chloride channel being a major inhibitory presynaptic receptor at mammalian rod bipolar cell axon terminals. Glutamate binding gates a large Cl(-) conductance that mediates inhibition, affecting visual processing in the retina. The sequence is that of Excitatory amino acid transporter 5 from Mus musculus (Mouse).